The chain runs to 302 residues: Large ribosomal subunit protein bL28m (302 aa).

The protein belongs to the bacterial ribosomal protein bL28 family. As to quaternary structure, component of the mitochondrial ribosome large subunit (39S) which comprises a 16S rRNA and about 50 distinct proteins.

Its subcellular location is the mitochondrion. The sequence is that of Large ribosomal subunit protein bL28m (mRpL28) from Drosophila melanogaster (Fruit fly).